Here is a 63-residue protein sequence, read N- to C-terminus: Ferredoxin (63 aa).

Positions 2 to 29 (KVTVDQDLCIACGTCIDLCPSVFDWDDE) constitute a 4Fe-4S ferredoxin-type domain. [4Fe-4S] cluster is bound by residues C10, C13, C16, and C55.

[4Fe-4S] cluster serves as cofactor.

Its function is as follows. Ferredoxins are iron-sulfur proteins that transfer electrons in a wide variety of metabolic reactions. This is Ferredoxin from Moorella thermoacetica (Clostridium thermoaceticum).